The chain runs to 94 residues: Large ribosomal subunit protein bL25 (94 aa).

The protein belongs to the bacterial ribosomal protein bL25 family. Part of the 50S ribosomal subunit; part of the 5S rRNA/L5/L18/L25 subcomplex. Contacts the 5S rRNA. Binds to the 5S rRNA independently of L5 and L18.

Functionally, this is one of the proteins that binds to the 5S RNA in the ribosome where it forms part of the central protuberance. In Photorhabdus laumondii subsp. laumondii (strain DSM 15139 / CIP 105565 / TT01) (Photorhabdus luminescens subsp. laumondii), this protein is Large ribosomal subunit protein bL25.